Here is a 299-residue protein sequence, read N- to C-terminus: 4-diphosphocytidyl-2-C-methyl-D-erythritol kinase (299 aa).

The active site involves K22. 108–118 is a binding site for ATP; the sequence is PVGAGLGGGSS. Residue D150 is part of the active site.

Belongs to the GHMP kinase family. IspE subfamily.

The enzyme catalyses 4-CDP-2-C-methyl-D-erythritol + ATP = 4-CDP-2-C-methyl-D-erythritol 2-phosphate + ADP + H(+). Its pathway is isoprenoid biosynthesis; isopentenyl diphosphate biosynthesis via DXP pathway; isopentenyl diphosphate from 1-deoxy-D-xylulose 5-phosphate: step 3/6. Functionally, catalyzes the phosphorylation of the position 2 hydroxy group of 4-diphosphocytidyl-2C-methyl-D-erythritol. This Desulfotalea psychrophila (strain LSv54 / DSM 12343) protein is 4-diphosphocytidyl-2-C-methyl-D-erythritol kinase.